A 305-amino-acid chain; its full sequence is UDP-3-O-acyl-N-acetylglucosamine deacetylase (305 aa).

Zn(2+)-binding residues include His78, His237, and Asp241. The active-site Proton donor is the His264.

It belongs to the LpxC family. Zn(2+) serves as cofactor.

The catalysed reaction is a UDP-3-O-[(3R)-3-hydroxyacyl]-N-acetyl-alpha-D-glucosamine + H2O = a UDP-3-O-[(3R)-3-hydroxyacyl]-alpha-D-glucosamine + acetate. The protein operates within glycolipid biosynthesis; lipid IV(A) biosynthesis; lipid IV(A) from (3R)-3-hydroxytetradecanoyl-[acyl-carrier-protein] and UDP-N-acetyl-alpha-D-glucosamine: step 2/6. In terms of biological role, catalyzes the hydrolysis of UDP-3-O-myristoyl-N-acetylglucosamine to form UDP-3-O-myristoylglucosamine and acetate, the committed step in lipid A biosynthesis. This chain is UDP-3-O-acyl-N-acetylglucosamine deacetylase, found in Paraburkholderia phytofirmans (strain DSM 17436 / LMG 22146 / PsJN) (Burkholderia phytofirmans).